A 269-amino-acid chain; its full sequence is S-adenosylmethionine decarboxylase proenzyme (269 aa).

Ser-118 acts as the Schiff-base intermediate with substrate; via pyruvic acid in catalysis. At Ser-118 the chain carries Pyruvic acid (Ser); by autocatalysis. The active-site Proton acceptor; for processing activity is His-123. The active-site Proton donor; for catalytic activity is Cys-146.

The protein belongs to the prokaryotic AdoMetDC family. Type 2 subfamily. Heterooctamer of four alpha and four beta chains arranged as a tetramer of alpha/beta heterodimers. It depends on pyruvate as a cofactor. In terms of processing, is synthesized initially as an inactive proenzyme. Formation of the active enzyme involves a self-maturation process in which the active site pyruvoyl group is generated from an internal serine residue via an autocatalytic post-translational modification. Two non-identical subunits are generated from the proenzyme in this reaction, and the pyruvate is formed at the N-terminus of the alpha chain, which is derived from the carboxyl end of the proenzyme. The post-translation cleavage follows an unusual pathway, termed non-hydrolytic serinolysis, in which the side chain hydroxyl group of the serine supplies its oxygen atom to form the C-terminus of the beta chain, while the remainder of the serine residue undergoes an oxidative deamination to produce ammonia and the pyruvoyl group blocking the N-terminus of the alpha chain.

It catalyses the reaction S-adenosyl-L-methionine + H(+) = S-adenosyl 3-(methylsulfanyl)propylamine + CO2. The protein operates within amine and polyamine biosynthesis; S-adenosylmethioninamine biosynthesis; S-adenosylmethioninamine from S-adenosyl-L-methionine: step 1/1. Functionally, catalyzes the decarboxylation of S-adenosylmethionine to S-adenosylmethioninamine (dcAdoMet), the propylamine donor required for the synthesis of the polyamines spermine and spermidine from the diamine putrescine. The protein is S-adenosylmethionine decarboxylase proenzyme of Brevibacillus brevis (strain 47 / JCM 6285 / NBRC 100599).